Consider the following 355-residue polypeptide: MTNLDRHLSKFAYREEFAGNTEVLATAAYKEDCADASTGLTPKLPLEVEFGKMSKRPDWIKVKAPNSSEYYNTKDLIKNLKLNTVCEEAACPNIGECWSKKHATVMILGSVCTRACRFCNVKTGRPDLLDPHEPQRLAEAVQKLGLKHVVITSVDRDDLEDGGATHFAECISEIRKSSPNTTIEILTPDFLRKDGAAEIIANAKPDVFNHNVETVPSLYNTIRPGARYYNSLSLLHNIKKLSPEVFTKSGMMVGLGEEISEVVQVMDDLREAKVDFLTIGQYLQPTKNHAEVAKYVTPEEFKYLERVARTKGFLMVSASPLTRSSYHADEDFEKLKENYRHRHCEERRSIDVAIS.

The 49-residue stretch at 7–55 folds into the RPE1 insert domain; sequence HLSKFAYREEFAGNTEVLATAAYKEDCADASTGLTPKLPLEVEFGKMSK. Residues Cys86, Cys91, Cys97, Cys112, Cys116, Cys119, and Ser325 each coordinate [4Fe-4S] cluster. The 217-residue stretch at 98-314 folds into the Radical SAM core domain; the sequence is WSKKHATVMI…ERVARTKGFL (217 aa).

The protein belongs to the radical SAM superfamily. Lipoyl synthase family. [4Fe-4S] cluster is required as a cofactor.

The protein resides in the cytoplasm. The enzyme catalyses [[Fe-S] cluster scaffold protein carrying a second [4Fe-4S](2+) cluster] + N(6)-octanoyl-L-lysyl-[protein] + 2 oxidized [2Fe-2S]-[ferredoxin] + 2 S-adenosyl-L-methionine + 4 H(+) = [[Fe-S] cluster scaffold protein] + N(6)-[(R)-dihydrolipoyl]-L-lysyl-[protein] + 4 Fe(3+) + 2 hydrogen sulfide + 2 5'-deoxyadenosine + 2 L-methionine + 2 reduced [2Fe-2S]-[ferredoxin]. Its pathway is protein modification; protein lipoylation via endogenous pathway; protein N(6)-(lipoyl)lysine from octanoyl-[acyl-carrier-protein]: step 2/2. Its function is as follows. Catalyzes the radical-mediated insertion of two sulfur atoms into the C-6 and C-8 positions of the octanoyl moiety bound to the lipoyl domains of lipoate-dependent enzymes, thereby converting the octanoylated domains into lipoylated derivatives. This chain is Lipoyl synthase, found in Rickettsia bellii (strain RML369-C).